The primary structure comprises 57 residues: Weak toxin CM-1b (57 aa).

4 disulfide bridges follow: cysteine 3–cysteine 19, cysteine 12–cysteine 37, cysteine 40–cysteine 49, and cysteine 50–cysteine 55.

It belongs to the three-finger toxin family. Short-chain subfamily. Orphan group XX sub-subfamily. Expressed by the venom gland.

It localises to the secreted. This Hemachatus haemachatus (Rinkhals) protein is Weak toxin CM-1b.